The following is a 2298-amino-acid chain: MKGHQFKSWIFELREILREIKNSHYFLDSWTQFNSVGSFIHIFFHQERFIKLLDPRIWSILLSRNSQGSTSNRYFTIKGVVLFVVAVLIYRINNRNMVERKNLYLTGLLPIPMNSIGPRNDTLEESFGSSNINRLIVSLLYLPKGKKISESSFLDPKESTWVLPITKKCIMPESNWSSRWWRNWIGKKRDSSRKISNETVAGIDISFKEKDIKYLEFLFVYYMDDPIRKGHDWELFDRLSPSKRRNIINLNSGQLFEILVKDWICYLMFAFREKIPIEVEGFFKQQGAGSTIQSNDIEHVSHLFSRNKWAISLQNCAQFHMWQFRQDLFVSWGKNPHESDFLRNISRENWIWLDNVWLVNKDRFFSKVRNVSSNIQYDSTRSSFVQVTDSSQLKGSSDQFRDHFDSISNEDSEYHTLINQREIQQLKERSILWDPSFLQTERTEIESDQFPKCLSGYSSMPRLFTEREKRMNNHLLPEEIEEFLGNPTRPIRSFFSDRWSELHLGSNPTERSTRDQKLLKKEQDVSFVPSRRSENKEIVNIFKIITYLQNTVSIHPISSDLGCDMVPKDELDMDSSNKISFLNKNPFFDLFHLFHDRNRGGSTLHHDFESEERFQEMADLFTLSITEPDLVYHKGFAFSIDSYGLDQKQFLNEVFNSRDESKKKSLLVLPPIFYEENESFYRRIRKKWVRISCGNDLEDPKPKRVVFASNNIMEAVNQYRLIRNLIQIQYSTYGYIRNVLNRFFLMNRSDRNFEYGIQRDQIGNDTLNHRTIMKYTINQHLSNLKKSQKKWFDPLIFLSRTERSINRDPNAYRYKWSNGSKNFQEHLEHFVSEQKSRFQVVFDRLRINQYSIDWSEVIDKKDLSKSLRFFLSKLLLFLSKLLLFLSNSLPFFFVSFENIPIHRSEIHIYELKGPNDQLCNQLLESIGLQIVHLKKLKPFLLDDHNTSQKSKFLINGGTISPFLFNKIPKWMIDSFHTRKNRRKSFDNTDSYFSMISHDQDNWLNPVKPFHRSSLISSFYKANRLRFLNNPHHFCFYCNKRFPFYVEKARINNYDFTYGQFLNILFIRNKIFSLCGGKKKHAFLERDTISPSPIESQVSNIFISNDFPQSGDERYNLYKSFHFAIRSDPLVRRAIYSIADISGTPLTEGQIVNFERTYCQPLSDMNLSDSEEKNLHQYLNFNSNMGLIHTPCSEKYLPSEKRKKRSLCLKKCVEKGQMDRTFQRDSAFSTLSKWNLVQTYMPWFLTSTGYKYLNLIFLDTFSDLLPILSSSQKFVSIFHDIMHGSDISWRILQKKWCLPQWNLISEISSKCLHNLLLSEEMIHRNNESPLISTHLRSPNVREFLYSILFLLLVAGYLVRTHLLFVSRAYSELQTEFEKVKSLMIPSYMIELRKLLDRYPTSELNSFWLKNLFLVALEQLGDSLEEIRGSGGNMLWGSDPAYGVKSIRSKKKYLNINFIDIIDLISIIPNPINRITFSRNTRHLSHTSKEIYSLIRKRKNVSGDWIDDKIESWVANSDSIDDKEREFLVQFSTLTAEKRIDQILLSLTHSDHLSKNDSGYQMIEQPGTIYLRYLVDIHKKYLMNYEFNTSCLVERRIFLAHYQTITYSQTSCGANSFHFPSHGKPFSLRLALSPSRGILVIGSIGTGRSYLVKYLATNSYVPFITVFLNKFLDNKPKGFFIDDIDIDASDDIDASDDIDASNDIDDSDDIDRELDTELELLTMMNALTMDMMSEIDRFYITLQFELAKAMSPCIIWIPNIHDLDVNESNYLSLGLLVNSLSRDCERCSTRNILVIASTHIPKKVDPALIAPNKLNTCIKIRRLLIPQQRKHFFTLSYTRGFHLEKKMFHTNGFESITMGSNARDLVALTNEALSISITQKKSIIDTNTIRSALHRQTWDLRSQVRSVQDHGILFYQIGRAVAQNVLLSNCPIDPISIYMKKKSCNEGDSYLYKWYFELGTSMKKLTILLYLLSCSAGSVAQDLWSLPGPDEKNGITSYGFVENDSDLVHGLLEVEGALVGSSRTEKDCSQFDNDRVTLLLRSEPRNPLYMMQNGSCSIVDQRFLYEKYESEFEEGEGEGVLDPQQIEEDLFNHIVWAPRIWRPWGFLFDCIERPNELGFPYWARSFRGKRIIYDEKDELQANDSEFLQSGTVQYQTRDRSSKEQGFFRISQFIWDPADPLFFLFKDQPFVSVFSHREFFADEEMSKGLLTSQTDPPTSIYKRWFIKNTQEKHFELLIHRQRWLRTNSSLSNGFFRSNTPSESYQYLSNLFLSNGTLLDQMTKTLLRKRWLFPDEMKIGFM.

Residue 1640-1647 (GSIGTGRS) participates in ATP binding.

This sequence belongs to the Ycf2 family.

Its subcellular location is the plastid. The protein localises to the chloroplast stroma. Functionally, probable ATPase of unknown function. Its presence in a non-photosynthetic plant (Epifagus virginiana) and experiments in tobacco indicate that it has an essential function which is probably not related to photosynthesis. This Carica papaya (Papaya) protein is Protein Ycf2.